Reading from the N-terminus, the 141-residue chain is Large ribosomal subunit protein uL11 (141 aa).

It belongs to the universal ribosomal protein uL11 family. As to quaternary structure, part of the ribosomal stalk of the 50S ribosomal subunit. Interacts with L10 and the large rRNA to form the base of the stalk. L10 forms an elongated spine to which L12 dimers bind in a sequential fashion forming a multimeric L10(L12)X complex. In terms of processing, one or more lysine residues are methylated.

In terms of biological role, forms part of the ribosomal stalk which helps the ribosome interact with GTP-bound translation factors. The protein is Large ribosomal subunit protein uL11 of Campylobacter lari (strain RM2100 / D67 / ATCC BAA-1060).